A 131-amino-acid polypeptide reads, in one-letter code: Profilin-6 (131 aa).

The cysteines at positions 13 and 115 are disulfide-linked. The Involved in PIP2 interaction motif lies at 81 to 97; the sequence is VVIRGKKGAGGITIKKT. Residue T111 is modified to Phosphothreonine.

Belongs to the profilin family. As to quaternary structure, occurs in many kinds of cells as a complex with monomeric actin in a 1:1 ratio. In terms of processing, phosphorylated by MAP kinases.

The protein localises to the cytoplasm. It is found in the cytoskeleton. Binds to actin and affects the structure of the cytoskeleton. At high concentrations, profilin prevents the polymerization of actin, whereas it enhances it at low concentrations. This is Profilin-6 from Corylus avellana (European hazel).